The primary structure comprises 88 residues: Small ribosomal subunit protein bS20 (88 aa).

Basic and acidic residues predominate over residues 1-17; the sequence is MANIKSNEKRLRQDIKR. The interval 1–25 is disordered; sequence MANIKSNEKRLRQDIKRNLNNKGQK.

This sequence belongs to the bacterial ribosomal protein bS20 family.

Its function is as follows. Binds directly to 16S ribosomal RNA. In Mycoplasma genitalium (strain ATCC 33530 / DSM 19775 / NCTC 10195 / G37) (Mycoplasmoides genitalium), this protein is Small ribosomal subunit protein bS20.